Here is a 630-residue protein sequence, read N- to C-terminus: Terpinolene synthase, chloroplastic (630 aa).

The N-terminal 52 residues, 1–52, are a transit peptide targeting the chloroplast; it reads MALVSILPLSSKSVLHKSWIVSTYEHKAISRTIPNLGLRGRGKSVTHSLRMS. Asp-381, Asp-385, Asn-525, and Asp-533 together coordinate Mg(2+). Residues 381–385 carry the DDXXD motif motif; that stretch reads DDIYD.

Belongs to the terpene synthase family. Tpsd subfamily. It depends on Mg(2+) as a cofactor. Mn(2+) is required as a cofactor. K(+) serves as cofactor.

It is found in the plastid. Its subcellular location is the chloroplast. The catalysed reaction is (2E)-geranyl diphosphate = terpinolene + diphosphate. The protein operates within terpene metabolism; oleoresin biosynthesis. Involved in defensive oleoresin formation in conifers in response to insect attack or other injury. Involved in monoterpene (C10) olefins biosynthesis. The protein is Terpinolene synthase, chloroplastic (ag9) of Abies grandis (Grand fir).